The chain runs to 206 residues: Octanoyltransferase (206 aa).

The 177-residue stretch at 30 to 206 (PETNDEIWLV…EFVTLLNNSI (177 aa)) folds into the BPL/LPL catalytic domain. Substrate is bound by residues 69–76 (RGGQVTYH), 137–139 (SLG), and 150–152 (GIA). C168 serves as the catalytic Acyl-thioester intermediate.

Belongs to the LipB family.

The protein resides in the cytoplasm. It carries out the reaction octanoyl-[ACP] + L-lysyl-[protein] = N(6)-octanoyl-L-lysyl-[protein] + holo-[ACP] + H(+). It functions in the pathway protein modification; protein lipoylation via endogenous pathway; protein N(6)-(lipoyl)lysine from octanoyl-[acyl-carrier-protein]: step 1/2. Its function is as follows. Catalyzes the transfer of endogenously produced octanoic acid from octanoyl-acyl-carrier-protein onto the lipoyl domains of lipoate-dependent enzymes. Lipoyl-ACP can also act as a substrate although octanoyl-ACP is likely to be the physiological substrate. The sequence is that of Octanoyltransferase from Francisella tularensis subsp. tularensis (strain FSC 198).